Here is a 231-residue protein sequence, read N- to C-terminus: 7-cyano-7-deazaguanine synthase (231 aa).

Residue 8–18 (FSGGQDSTTCL) coordinates ATP. 4 residues coordinate Zn(2+): C188, C197, C200, and C203.

It belongs to the QueC family. It depends on Zn(2+) as a cofactor.

It catalyses the reaction 7-carboxy-7-deazaguanine + NH4(+) + ATP = 7-cyano-7-deazaguanine + ADP + phosphate + H2O + H(+). Its pathway is purine metabolism; 7-cyano-7-deazaguanine biosynthesis. Its function is as follows. Catalyzes the ATP-dependent conversion of 7-carboxy-7-deazaguanine (CDG) to 7-cyano-7-deazaguanine (preQ(0)). The protein is 7-cyano-7-deazaguanine synthase of Escherichia coli (strain SMS-3-5 / SECEC).